The following is a 668-amino-acid chain: GTP-binding protein 1 (668 aa).

The interval 1–32 (MAAERSRSPVDSPVPASMFAPEPSSPGAARAA) is disordered. Phosphoserine occurs at positions 6, 8, 12, 24, 25, 44, 47, and 69. The 232-residue stretch at 158–389 (FLEVRVAVVG…LNLLSPRTSY (232 aa)) folds into the tr-type G domain. Positions 167–174 (GNVDAGKS) are G1. 167–174 (GNVDAGKS) is a GTP binding site. The segment at 206–210 (GRTSS) is G2. The G3 stretch occupies residues 252–255 (DLAG). GTP-binding positions include 252-256 (DLAGH) and 308-311 (TKID). Positions 308 to 311 (TKID) are G4. The G5 stretch occupies residues 366 to 368 (SNV). The span at 573-595 (LLQTTNNSPMNSKPQQIKMQSTK) shows a compositional bias: polar residues. The tract at residues 573 to 668 (LLQTTNNSPM…GACVTPASGC (96 aa)) is disordered. Position 580 is a phosphoserine (S580). Low complexity predominate over residues 609–619 (GVPAAGGPPTG). The segment covering 624-637 (SLGTAQAASTSGLQ) has biased composition (polar residues). Residues 646–657 (GRRRGGQRHKVK) are compositionally biased toward basic residues.

It belongs to the TRAFAC class translation factor GTPase superfamily. Classic translation factor GTPase family. GTPBP1 subfamily. Interacts with EXOSC2/RRP4, EXOSC3/RRP40, EXOSC5/RRP46, HNRNPD, HNRNPR and SYNCRIP. Identified in a complex with AANAT mRNA, but does not bind mRNA by itself. As to expression, detected in some neurons in the brain cortex. Detected in small arteries, dendritic cells and macrophages in the thymus. Detected in lung bronchi, in bronchial epithelial cells and in bronchial smooth muscle cells. Detected in smooth muscle cells in a broad range of organs (at protein level). Expressed in brain, thymus, lung, and kidney.

It is found in the cytoplasm. In terms of biological role, promotes degradation of target mRNA species. Plays a role in the regulation of circadian mRNA stability. Binds GTP and has GTPase activity. This is GTP-binding protein 1 (Gtpbp1) from Mus musculus (Mouse).